Consider the following 106-residue polypeptide: Synaptic plasticity regulator PANTS (106 aa).

Residues Leu67 to Gln106 form a disordered region.

This sequence belongs to the UPF0545 family. Rapidly degraded by proteolysis following neuronal stimulation, resulting in increased AMPA receptor clustering.

It localises to the synapse. The protein localises to the synaptic cleft. Negatively regulates long-term potentiation and modulates adult synaptic plasticity. This Xenopus laevis (African clawed frog) protein is Synaptic plasticity regulator PANTS.